The chain runs to 160 residues: Ureidoglycolate lyase (160 aa).

This sequence belongs to the ureidoglycolate lyase family. In terms of assembly, homodimer. The cofactor is Ni(2+).

The enzyme catalyses (S)-ureidoglycolate = urea + glyoxylate. The protein operates within nitrogen metabolism; (S)-allantoin degradation. Its function is as follows. Catalyzes the catabolism of the allantoin degradation intermediate (S)-ureidoglycolate, generating urea and glyoxylate. Involved in the utilization of allantoin as nitrogen source. This Salmonella typhimurium (strain LT2 / SGSC1412 / ATCC 700720) protein is Ureidoglycolate lyase.